Here is an 86-residue protein sequence, read N- to C-terminus: Small ribosomal subunit protein bS20 (86 aa).

Belongs to the bacterial ribosomal protein bS20 family.

In terms of biological role, binds directly to 16S ribosomal RNA. This chain is Small ribosomal subunit protein bS20, found in Sulfurimonas denitrificans (strain ATCC 33889 / DSM 1251) (Thiomicrospira denitrificans (strain ATCC 33889 / DSM 1251)).